The sequence spans 284 residues: L-ribulose-5-phosphate 3-epimerase UlaE (284 aa).

The protein belongs to the L-ribulose-5-phosphate 3-epimerase family.

It carries out the reaction L-ribulose 5-phosphate = L-xylulose 5-phosphate. The protein operates within cofactor degradation; L-ascorbate degradation; D-xylulose 5-phosphate from L-ascorbate: step 3/4. Catalyzes the isomerization of L-xylulose-5-phosphate to L-ribulose-5-phosphate. Is involved in the anaerobic L-ascorbate utilization. The sequence is that of L-ribulose-5-phosphate 3-epimerase UlaE from Escherichia coli O139:H28 (strain E24377A / ETEC).